We begin with the raw amino-acid sequence, 356 residues long: MSWQNNLHSVSPYIAGEQPELTDMIKLNTNENPYQPSLQVQKVIEDFKSENLRLYPSTDAKFLRKALAEYHHLNTDQVFIGNGSDEVLSLSFLTFFNGQRAILMPDISYSFYPIYCELYRIPYQKIPLADDFSLSVNSYFQENGGIVIANPNAPTGMAISLQEIEEILQNNQDSIVLIDEAYIDFGGESCLPLLEKFDNLVVVQTFSKSRSLAGIRLGIAFGSAEAIAHLYDVKNSFNSYPIDSLAQKIGEASFTDETYFQKSVSKIITTRENFKNELIKLGFQVTDSKTNFVFVHHPKIDATTLFKVLYEAKIIVRHWNQARISDWLRITIGTDREMNTVIQFLKEYLKNKEKSY.

Position 208 is an N6-(pyridoxal phosphate)lysine (lysine 208).

Belongs to the class-II pyridoxal-phosphate-dependent aminotransferase family. Histidinol-phosphate aminotransferase subfamily. In terms of assembly, homodimer. Pyridoxal 5'-phosphate is required as a cofactor.

The enzyme catalyses L-histidinol phosphate + 2-oxoglutarate = 3-(imidazol-4-yl)-2-oxopropyl phosphate + L-glutamate. It functions in the pathway amino-acid biosynthesis; L-histidine biosynthesis; L-histidine from 5-phospho-alpha-D-ribose 1-diphosphate: step 7/9. This chain is Histidinol-phosphate aminotransferase, found in Lactococcus lactis subsp. cremoris (strain SK11).